The chain runs to 446 residues: 4-aminobutyrate aminotransferase (446 aa).

Lys291 bears the N6-(pyridoxal phosphate)lysine mark.

This sequence belongs to the class-III pyridoxal-phosphate-dependent aminotransferase family. The cofactor is pyridoxal 5'-phosphate.

It carries out the reaction 4-aminobutanoate + 2-oxoglutarate = succinate semialdehyde + L-glutamate. It catalyses the reaction (S)-3-amino-2-methylpropanoate + 2-oxoglutarate = 2-methyl-3-oxopropanoate + L-glutamate. The protein operates within amino-acid degradation; 4-aminobutanoate degradation. In Mycobacterium leprae (strain TN), this protein is 4-aminobutyrate aminotransferase (gabT).